The chain runs to 202 residues: IMP cyclohydrolase (202 aa).

Residues 29–52 are disordered; it reads VQRDGTVTVEPTPDAPETDNPYIS.

It belongs to the archaeal IMP cyclohydrolase family.

The enzyme catalyses IMP + H2O = 5-formamido-1-(5-phospho-D-ribosyl)imidazole-4-carboxamide. It participates in purine metabolism; IMP biosynthesis via de novo pathway; IMP from 5-formamido-1-(5-phospho-D-ribosyl)imidazole-4-carboxamide: step 1/1. Its function is as follows. Catalyzes the cyclization of 5-formylamidoimidazole-4-carboxamide ribonucleotide to IMP. The protein is IMP cyclohydrolase of Haloarcula marismortui (strain ATCC 43049 / DSM 3752 / JCM 8966 / VKM B-1809) (Halobacterium marismortui).